Reading from the N-terminus, the 78-residue chain is MKRSFLLLLTILTIFIILGQGVMGNDEQLRGNRCFQIKFKTGKCVPKECQTACQEKLRKPKLKGEGFCMKECTCCFYT.

Positions 1–24 (MKRSFLLLLTILTIFIILGQGVMG) are cleaved as a signal peptide. 4 disulfides stabilise this stretch: Cys34-Cys75, Cys44-Cys68, Cys49-Cys72, and Cys53-Cys74.

This sequence belongs to the DEFL family.

It is found in the secreted. This is Putative defensin-like protein 133 (LCR33) from Arabidopsis thaliana (Mouse-ear cress).